A 468-amino-acid polypeptide reads, in one-letter code: Eukaryotic translation initiation factor 3 subunit M (468 aa).

Positions 40 to 61 are disordered; it reads VAPLIEPLRQQEQSEEEPDRKQ. The PCI domain occupies 206-377; the sequence is DLELAQTHVV…SEFLVHRATY (172 aa). A disordered region spans residues 419 to 468; that stretch reads QAAAEEVGQGKSGDKGAKGGDRRRNPQQQQQSQPSQPQQAREVELVGGAE. Basic and acidic residues predominate over residues 430 to 442; sequence SGDKGAKGGDRRR. The segment covering 444–457 has biased composition (low complexity); it reads PQQQQQSQPSQPQQ.

It belongs to the eIF-3 subunit M family. In terms of assembly, component of the eukaryotic translation initiation factor 3 (eIF-3) complex.

Its subcellular location is the cytoplasm. Its function is as follows. Component of the eukaryotic translation initiation factor 3 (eIF-3) complex, which is involved in protein synthesis of a specialized repertoire of mRNAs and, together with other initiation factors, stimulates binding of mRNA and methionyl-tRNAi to the 40S ribosome. The eIF-3 complex specifically targets and initiates translation of a subset of mRNAs involved in cell proliferation. The sequence is that of Eukaryotic translation initiation factor 3 subunit M from Aspergillus fumigatus (strain CBS 144.89 / FGSC A1163 / CEA10) (Neosartorya fumigata).